The following is a 130-amino-acid chain: MAKPVEKKTKKKIKRVITDGVAHVHASFNNTIVTITDRQGNALSWATSGGAGFRGSRKSTPFAAQVAAEKAGRAALDYGVKSLEVRIKGPGPGRESAVRSLNNVGYKITNIIDVTPIPHNGCRPPKKRRV.

The protein belongs to the universal ribosomal protein uS11 family. Part of the 30S ribosomal subunit. Interacts with proteins S7 and S18. Binds to IF-3.

In terms of biological role, located on the platform of the 30S subunit, it bridges several disparate RNA helices of the 16S rRNA. Forms part of the Shine-Dalgarno cleft in the 70S ribosome. The polypeptide is Small ribosomal subunit protein uS11 (Xanthomonas oryzae pv. oryzae (strain MAFF 311018)).